The primary structure comprises 264 residues: Thiazole synthase (264 aa).

Lysine 104 (schiff-base intermediate with DXP) is an active-site residue. 1-deoxy-D-xylulose 5-phosphate-binding positions include glycine 165, 191–192 (AG), and 213–214 (NT).

This sequence belongs to the ThiG family. In terms of assembly, homotetramer. Forms heterodimers with either ThiH or ThiS.

The protein localises to the cytoplasm. The enzyme catalyses [ThiS sulfur-carrier protein]-C-terminal-Gly-aminoethanethioate + 2-iminoacetate + 1-deoxy-D-xylulose 5-phosphate = [ThiS sulfur-carrier protein]-C-terminal Gly-Gly + 2-[(2R,5Z)-2-carboxy-4-methylthiazol-5(2H)-ylidene]ethyl phosphate + 2 H2O + H(+). Its pathway is cofactor biosynthesis; thiamine diphosphate biosynthesis. Functionally, catalyzes the rearrangement of 1-deoxy-D-xylulose 5-phosphate (DXP) to produce the thiazole phosphate moiety of thiamine. Sulfur is provided by the thiocarboxylate moiety of the carrier protein ThiS. In vitro, sulfur can be provided by H(2)S. The sequence is that of Thiazole synthase from Oleidesulfovibrio alaskensis (strain ATCC BAA-1058 / DSM 17464 / G20) (Desulfovibrio alaskensis).